The chain runs to 249 residues: Coproheme decarboxylase (249 aa).

Residue tyrosine 145 is part of the active site. Residues 145 to 149 (YPMAR) and histidine 172 contribute to the Fe-coproporphyrin III site.

The protein belongs to the ChdC family. Type 1 subfamily. The cofactor is Fe-coproporphyrin III.

The enzyme catalyses Fe-coproporphyrin III + 2 H2O2 + 2 H(+) = heme b + 2 CO2 + 4 H2O. The catalysed reaction is Fe-coproporphyrin III + H2O2 + H(+) = harderoheme III + CO2 + 2 H2O. It catalyses the reaction harderoheme III + H2O2 + H(+) = heme b + CO2 + 2 H2O. Its pathway is porphyrin-containing compound metabolism; protoheme biosynthesis. Involved in coproporphyrin-dependent heme b biosynthesis. Catalyzes the decarboxylation of Fe-coproporphyrin III (coproheme) to heme b (protoheme IX), the last step of the pathway. The reaction occurs in a stepwise manner with a three-propionate intermediate. In Oceanobacillus iheyensis (strain DSM 14371 / CIP 107618 / JCM 11309 / KCTC 3954 / HTE831), this protein is Coproheme decarboxylase.